A 688-amino-acid chain; its full sequence is Polyphosphate kinase (688 aa).

Asn-45 is a binding site for ATP. Mg(2+) is bound by residues Arg-375 and Arg-405. Residues 430-464 enclose the PLD phosphodiesterase domain; the sequence is PGLKIHAKLFLISRKEGDDVVRYAHIGTGNFNEKT. His-435 functions as the Phosphohistidine intermediate in the catalytic mechanism. The ATP site is built by Tyr-468, Arg-564, and His-592.

Belongs to the polyphosphate kinase 1 (PPK1) family. It depends on Mg(2+) as a cofactor. Post-translationally, an intermediate of this reaction is the autophosphorylated ppk in which a phosphate is covalently linked to a histidine residue through a N-P bond.

It catalyses the reaction [phosphate](n) + ATP = [phosphate](n+1) + ADP. Functionally, catalyzes the reversible transfer of the terminal phosphate of ATP to form a long-chain polyphosphate (polyP). The polypeptide is Polyphosphate kinase (Salmonella typhimurium (strain LT2 / SGSC1412 / ATCC 700720)).